Here is an 81-residue protein sequence, read N- to C-terminus: Protein Vpu (81 aa).

The Extracellular segment spans residues 1-7 (MQPLQIL). The helical transmembrane segment at 8-28 (SIVALVVAAIIAIVVWSIVFI) threads the bilayer. Residues 29–81 (LIRKILRQRKIDRLIDRIRERAEDSGNESEGIRKELSALVEMGHDAPGDIDDL) lie on the Cytoplasmic side of the membrane. Phosphoserine; by host CK2 is present on residues S53 and S57.

Belongs to the HIV-1 VPU protein family. Homopentamer. Interacts with host CD4 and BRTC; these interactions induce proteasomal degradation of CD4. Interacts with host BST2; this interaction leads to the degradation of host BST2. Interacts with host FBXW11. Interacts with host AP1M1; this interaction plays a role in the mistrafficking and subsequent degradation of host BST2. Interacts with host RANBP2; this interaction allows Vpu to down-regulate host BLM sumoylation. Post-translationally, phosphorylated by host CK2. This phosphorylation is necessary for interaction with human BTRC and degradation of CD4.

It is found in the host membrane. Its activity is regulated as follows. Ion channel activity is inhibited by hexamethylene amiloride in vitro. Enhances virion budding by targeting host CD4 and Tetherin/BST2 to proteasome degradation. Degradation of CD4 prevents any unwanted premature interactions between viral Env and its host receptor CD4 in the endoplasmic reticulum. Degradation of antiretroviral protein Tetherin/BST2 is important for virion budding, as BST2 tethers new viral particles to the host cell membrane. Mechanistically, Vpu bridges either CD4 or BST2 to BTRC, a substrate recognition subunit of the Skp1/Cullin/F-box protein E3 ubiquitin ligase, induces their ubiquitination and subsequent proteasomal degradation. The alteration of the E3 ligase specificity by Vpu seems to promote the degradation of host IKBKB, leading to NF-kappa-B down-regulation and subsequent apoptosis. Acts as a viroporin that forms an oligomeric ion channel in membranes. Modulates the host DNA repair mechanisms to promote degradation of nuclear viral cDNA in cells that are already productively infected in order to suppress immune sensing and proviral hyper-integration (superinfection). Manipulates PML-NBs and modulates SUMOylation of host BLM protein thereby enhancing its DNA-end processing activity toward viral unintegrated linear DNA. Also inhibits RAD52-mediated homologous repair of viral cDNA, preventing the generation of dead-end circular forms of single copies of the long terminal repeat and permitting sustained nucleolytic attack. This chain is Protein Vpu, found in Homo sapiens (Human).